We begin with the raw amino-acid sequence, 231 residues long: MIDVQHIDHSFTIGKKGRENEVPVLKDVSLSVAKGEIACIVGRSGSGKSTLLNLISGYISPTKGRIVINGTDVTGFNEKEWAQFRLDHFGFIFQSFQLIPGLTTYENVEMPLALKGIKPSERKQKVQDMLKRVGLENHAAHYPNELSGGQQQRVSIARALILNPSIILADEPTGSLDSETEHEVLELIQQLNRERGITFVIITHDDEVASIGHSKFQLHDGVLKGGITVEV.

The ABC transporter domain occupies 4–231; the sequence is VQHIDHSFTI…VLKGGITVEV (228 aa). 42–49 lines the ATP pocket; sequence GRSGSGKS.

It belongs to the ABC transporter superfamily. In terms of assembly, the complex is composed of 2 ATP-binding proteins (YtrB and YtrE), 2 transmembrane proteins (YtrC and YtrD) and a solute-binding protein (YtrF).

It localises to the cell membrane. Part of the ABC transporter complex YtrBCDEF that plays a role in acetoin utilization during stationary phase and sporulation. In Bacillus subtilis (strain 168), this protein is ABC transporter ATP-binding protein YtrE (ytrE).